The primary structure comprises 376 residues: Chaperone protein DnaJ (376 aa).

Residues 5–70 form the J domain; sequence DYYEVLGVAK…QKRAAYDQYG (66 aa). The segment at 136–214 adopts a CR-type zinc-finger fold; that stretch reads GYDTQIRVPS…CHGSGKVKET (79 aa). Positions 149, 152, 166, 169, 188, 191, 202, and 205 each coordinate Zn(2+). 4 CXXCXGXG motif repeats span residues 149 to 156, 166 to 173, 188 to 195, and 202 to 209; these read CGVCHGSG, CPTCHGQG, CPKCHGTG, and CVHCHGSG.

The protein belongs to the DnaJ family. In terms of assembly, homodimer. The cofactor is Zn(2+).

The protein localises to the cytoplasm. Functionally, participates actively in the response to hyperosmotic and heat shock by preventing the aggregation of stress-denatured proteins and by disaggregating proteins, also in an autonomous, DnaK-independent fashion. Unfolded proteins bind initially to DnaJ; upon interaction with the DnaJ-bound protein, DnaK hydrolyzes its bound ATP, resulting in the formation of a stable complex. GrpE releases ADP from DnaK; ATP binding to DnaK triggers the release of the substrate protein, thus completing the reaction cycle. Several rounds of ATP-dependent interactions between DnaJ, DnaK and GrpE are required for fully efficient folding. Also involved, together with DnaK and GrpE, in the DNA replication of plasmids through activation of initiation proteins. The polypeptide is Chaperone protein DnaJ (Burkholderia pseudomallei (strain 1710b)).